The sequence spans 120 residues: Succinate dehydrogenase assembly factor 3, mitochondrial (120 aa).

Residues 1 to 36 (MSRILMSQLTHPQRVRLLYKTILRLHRGLPAELRAL) constitute a mitochondrion transit peptide.

It belongs to the complex I LYR family. SDHAF3 subfamily. As to quaternary structure, interacts with SdhB within an SdhA-SdhB subcomplex.

Its subcellular location is the mitochondrion matrix. Its function is as follows. Plays an essential role in the assembly of succinate dehydrogenase (SDH), an enzyme complex (also referred to as respiratory complex II) that is a component of both the tricarboxylic acid (TCA) cycle and the mitochondrial electron transport chain, and which couples the oxidation of succinate to fumarate with the reduction of ubiquinone (coenzyme Q) to ubiquinol. Promotes maturation of the iron-sulfur protein subunit SdhB of the SDH catalytic dimer, protecting it from the deleterious effects of oxidants. This Drosophila melanogaster (Fruit fly) protein is Succinate dehydrogenase assembly factor 3, mitochondrial.